The sequence spans 426 residues: Serine--tRNA ligase (426 aa).

228 to 230 (TSE) contacts L-serine. Residues 259–261 (RRE) and Val275 contribute to the ATP site. Glu282 contacts L-serine. Residue 346-349 (ELTS) coordinates ATP. Thr386 provides a ligand contact to L-serine.

It belongs to the class-II aminoacyl-tRNA synthetase family. Type-1 seryl-tRNA synthetase subfamily. As to quaternary structure, homodimer. The tRNA molecule binds across the dimer.

It is found in the cytoplasm. It catalyses the reaction tRNA(Ser) + L-serine + ATP = L-seryl-tRNA(Ser) + AMP + diphosphate + H(+). The enzyme catalyses tRNA(Sec) + L-serine + ATP = L-seryl-tRNA(Sec) + AMP + diphosphate + H(+). It participates in aminoacyl-tRNA biosynthesis; selenocysteinyl-tRNA(Sec) biosynthesis; L-seryl-tRNA(Sec) from L-serine and tRNA(Sec): step 1/1. Its function is as follows. Catalyzes the attachment of serine to tRNA(Ser). Is also able to aminoacylate tRNA(Sec) with serine, to form the misacylated tRNA L-seryl-tRNA(Sec), which will be further converted into selenocysteinyl-tRNA(Sec). In Arthrobacter sp. (strain FB24), this protein is Serine--tRNA ligase.